Consider the following 245-residue polypeptide: Biosynthetic peptidoglycan transglycosylase (245 aa).

The chain crosses the membrane as a helical span at residues 20–42 (VYAGSVFAGAWLATQLFYLVQIA).

The protein belongs to the glycosyltransferase 51 family.

The protein localises to the cell inner membrane. The catalysed reaction is [GlcNAc-(1-&gt;4)-Mur2Ac(oyl-L-Ala-gamma-D-Glu-L-Lys-D-Ala-D-Ala)](n)-di-trans,octa-cis-undecaprenyl diphosphate + beta-D-GlcNAc-(1-&gt;4)-Mur2Ac(oyl-L-Ala-gamma-D-Glu-L-Lys-D-Ala-D-Ala)-di-trans,octa-cis-undecaprenyl diphosphate = [GlcNAc-(1-&gt;4)-Mur2Ac(oyl-L-Ala-gamma-D-Glu-L-Lys-D-Ala-D-Ala)](n+1)-di-trans,octa-cis-undecaprenyl diphosphate + di-trans,octa-cis-undecaprenyl diphosphate + H(+). It participates in cell wall biogenesis; peptidoglycan biosynthesis. Its function is as follows. Peptidoglycan polymerase that catalyzes glycan chain elongation from lipid-linked precursors. The sequence is that of Biosynthetic peptidoglycan transglycosylase from Burkholderia ambifaria (strain ATCC BAA-244 / DSM 16087 / CCUG 44356 / LMG 19182 / AMMD) (Burkholderia cepacia (strain AMMD)).